A 505-amino-acid chain; its full sequence is Maturase K (505 aa).

The protein belongs to the intron maturase 2 family. MatK subfamily.

It is found in the plastid. The protein resides in the chloroplast. Usually encoded in the trnK tRNA gene intron. Probably assists in splicing its own and other chloroplast group II introns. This chain is Maturase K, found in Micranthes integrifolia (Wholeleaf saxifrage).